The chain runs to 176 residues: RNA pyrophosphohydrolase (176 aa).

A Nudix hydrolase domain is found at 6–149 (GYRPNVGIII…KRNVYEMALT (144 aa)). A Nudix box motif is present at residues 38 to 59 (GGIKPGESPEAAMYRELMEEVG).

It belongs to the Nudix hydrolase family. RppH subfamily. A divalent metal cation serves as cofactor.

Functionally, accelerates the degradation of transcripts by removing pyrophosphate from the 5'-end of triphosphorylated RNA, leading to a more labile monophosphorylated state that can stimulate subsequent ribonuclease cleavage. The protein is RNA pyrophosphohydrolase of Laribacter hongkongensis (strain HLHK9).